A 219-amino-acid polypeptide reads, in one-letter code: Peptidyl-tRNA hydrolase (219 aa).

Tyr-26 is a binding site for tRNA. His-31 serves as the catalytic Proton acceptor. TRNA contacts are provided by Tyr-78, Asn-80, and Asn-126.

The protein belongs to the PTH family. Monomer.

Its subcellular location is the cytoplasm. The enzyme catalyses an N-acyl-L-alpha-aminoacyl-tRNA + H2O = an N-acyl-L-amino acid + a tRNA + H(+). In terms of biological role, hydrolyzes ribosome-free peptidyl-tRNAs (with 1 or more amino acids incorporated), which drop off the ribosome during protein synthesis, or as a result of ribosome stalling. Catalyzes the release of premature peptidyl moieties from peptidyl-tRNA molecules trapped in stalled 50S ribosomal subunits, and thus maintains levels of free tRNAs and 50S ribosomes. In Trichodesmium erythraeum (strain IMS101), this protein is Peptidyl-tRNA hydrolase.